Consider the following 105-residue polypeptide: MAFWLQAASLLVLLALSPGVDAAAAQHLCGSHLVDALYLVCGEKGFFYTPKRDVDPLIGFLSPKSAKENEEYPFKDQTEMMVKRGIVEQCCHKPCNIFDLQNYCN.

A signal peptide spans 1 to 22; that stretch reads MAFWLQAASLLVLLALSPGVDA. Intrachain disulfides connect cysteine 29–cysteine 91, cysteine 41–cysteine 104, and cysteine 90–cysteine 95. Positions 53–82 are cleaved as a propeptide — c peptide; that stretch reads DVDPLIGFLSPKSAKENEEYPFKDQTEMMV.

Belongs to the insulin family. In terms of assembly, heterodimer of a B chain and an A chain linked by two disulfide bonds.

It is found in the secreted. In terms of biological role, insulin decreases blood glucose concentration. It increases cell permeability to monosaccharides, amino acids and fatty acids. It accelerates glycolysis, the pentose phosphate cycle, and glycogen synthesis in liver. The chain is Insulin (ins) from Oncorhynchus keta (Chum salmon).